The sequence spans 271 residues: Neurexophilin-1 (271 aa).

The first 21 residues, 1–21, serve as a signal peptide directing secretion; that stretch reads MQAACWYVLLLLQPTVYLVTC. The tract at residues 22 to 97 is II; it reads ANLTNGGKSE…WDWLRNSTDL (76 aa). Residues Asn-23, Asn-68, Asn-93, Asn-146, Asn-156, and Asn-162 are each glycosylated (N-linked (GlcNAc...) asparagine). The III stretch occupies residues 98-176; the sequence is QEPRPRAKRR…LVPPTKIVEF (79 aa). Residues 177–185 form an IV (linker domain) region; sequence DLAQQTVID. A v (Cys-rich) region spans residues 186–271; it reads AKDSKSFNCR…HSDTPYFPSG (86 aa).

This sequence belongs to the neurexophilin family. May be proteolytically processed at the boundary between the N-terminal non-conserved and the central conserved domain in neuron-like cells.

Its subcellular location is the secreted. May be signaling molecules that resemble neuropeptides. Ligand for alpha-neurexins. In Bos taurus (Bovine), this protein is Neurexophilin-1 (NXPH1).